The primary structure comprises 234 residues: Probable transcriptional regulatory protein TcrX (234 aa).

The region spanning 10–124 (TVLVVDDEPV…EVVLRLRALL (115 aa)) is the Response regulatory domain. Aspartate 59 carries the post-translational modification 4-aspartylphosphate. Residues 135-232 (GAQLVVGDLV…LRGAGYVLKP (98 aa)) constitute a DNA-binding region (ompR/PhoB-type).

Post-translationally, phosphorylated by TcrY.

It localises to the cytoplasm. Functionally, member of the two-component regulatory system TcrY/TcrX. The chain is Probable transcriptional regulatory protein TcrX (tcrX) from Mycobacterium tuberculosis (strain ATCC 25618 / H37Rv).